The sequence spans 207 residues: Recombination protein RecR (207 aa).

The segment at 62–77 (CSRCNTFTEQDVCETC) adopts a C4-type zinc-finger fold. The Toprim domain maps to 85–184 (SVLCVVETPA…KVSRLARGVP (100 aa)).

This sequence belongs to the RecR family.

May play a role in DNA repair. It seems to be involved in an RecBC-independent recombinational process of DNA repair. It may act with RecF and RecO. The polypeptide is Recombination protein RecR (Ralstonia nicotianae (strain ATCC BAA-1114 / GMI1000) (Ralstonia solanacearum)).